We begin with the raw amino-acid sequence, 231 residues long: Ion-translocating oxidoreductase complex subunit E (231 aa).

The next 6 membrane-spanning stretches (helical) occupy residues 18 to 38 (ALVQLLGLCPLLAVTSTATNA), 39 to 59 (LGLGLATTLVLTLTNLTISTL), 63 to 83 (TPAEIRIPIYVMIIASVVSAV), 86 to 106 (LINAYAFGLYQSLGIFIPLIV), 125 to 145 (ALSALDGFSIGMGATCAMFVL), and 182 to 202 (PFLLAMLPPGAFIGLGLMLAG).

This sequence belongs to the NqrDE/RnfAE family. In terms of assembly, the complex is composed of six subunits: RsxA, RsxB, RsxC, RsxD, RsxE and RsxG.

It is found in the cell inner membrane. Part of a membrane-bound complex that couples electron transfer with translocation of ions across the membrane. Required to maintain the reduced state of SoxR. The chain is Ion-translocating oxidoreductase complex subunit E from Escherichia coli O6:H1 (strain CFT073 / ATCC 700928 / UPEC).